Consider the following 729-residue polypeptide: Golgin subfamily A member 5 (729 aa).

The residue at position 2 (Ser-2) is an N-acetylserine. Over 2-696 (SWFADLAGRA…IFLRRYPIAR (695 aa)) the chain is Cytoplasmic. Dimethylated arginine occurs at positions 27 and 89. 2 disordered regions span residues 89 to 222 (RTVG…SQEL) and 626 to 645 (SASS…VDSG). Ser-116 bears the Phosphoserine mark. Residues 134–146 (PTGRVEVKKEKGR) are compositionally biased toward basic and acidic residues. Residues 148-167 (PVSPSSPSGVSSVNTSVTTT) are compositionally biased toward low complexity. Composition is skewed to polar residues over residues 175-186 (GSQSPGVNSSDS) and 626-638 (SASS…SAIN). A coiled-coil region spans residues 215–629 (GSSRSQELSN…LEQQVHSASS (415 aa)). The chain crosses the membrane as a helical; Anchor for type IV membrane protein span at residues 697–717 (VFVIIYMALLHLWVMIVLLTY). The Lumenal segment spans residues 718–729 (SPEMHHDQPYGK).

Homodimer. Interacts with RAB1A that has been activated by GTP-binding. Interacts with isoform CASP of CUX1. In terms of processing, highly phosphorylated during mitosis. Phosphorylation is barely detectable during interphase.

It is found in the golgi apparatus membrane. Involved in maintaining Golgi structure. Stimulates the formation of Golgi stacks and ribbons. Involved in intra-Golgi retrograde transport. The sequence is that of Golgin subfamily A member 5 (Golga5) from Mus musculus (Mouse).